A 351-amino-acid polypeptide reads, in one-letter code: Phosphoribosylformylglycinamidine cyclo-ligase (351 aa).

It belongs to the AIR synthase family.

It is found in the cytoplasm. It catalyses the reaction 2-formamido-N(1)-(5-O-phospho-beta-D-ribosyl)acetamidine + ATP = 5-amino-1-(5-phospho-beta-D-ribosyl)imidazole + ADP + phosphate + H(+). The protein operates within purine metabolism; IMP biosynthesis via de novo pathway; 5-amino-1-(5-phospho-D-ribosyl)imidazole from N(2)-formyl-N(1)-(5-phospho-D-ribosyl)glycinamide: step 2/2. This chain is Phosphoribosylformylglycinamidine cyclo-ligase, found in Burkholderia cenocepacia (strain HI2424).